A 475-amino-acid chain; its full sequence is MSPQTETKAGAGFKAGVKDYRLTYYTPDYETKETDVLAAFRMTPQPGVPPEEAGAAVAAESSTGTWTTVWTDGLTSLDRYKGRCYDIEPVPGEENQYIAYVAYPLDLFEEGSVTNLFTSIVGNVFGFKALRALRLEDLRIPAAYAKTFQGPPHGIQVERDKLNKYGRPLLGCTIKPKLGLSAKNYGRAVYECLRGGLDFTKDDENVTSQPFMRWRDRFLFVAEATFKAQAETGEIKGHYLNATAGTCEEMMKRAAYARELGVPIIMHDYLTGGFTANTSLSNYCRDNGLLLHIHRAMHAVIDRQKNHGIHFRVLAKALRMSGGDHIHTGTVVGKLEGERQVTLGFVDLLRDDYIEKDRSRGIYFTQDWVALPGVLPVASGGIHVWHMPALTEIFGDDSVLQFGGGTLGHPWGNAPGAVANRVALEACVQARNEGRDLARQGNDIIREAAKWSPELAAACEVWKEIKFEFDTIDTL.

Residues 1–2 constitute a propeptide that is removed on maturation; it reads MS. Proline 3 carries the N-acetylproline modification. Lysine 14 carries the post-translational modification N6,N6,N6-trimethyllysine. 2 residues coordinate substrate: asparagine 123 and threonine 173. The Proton acceptor role is filled by lysine 175. Lysine 177 is a substrate binding site. Mg(2+) is bound by residues lysine 201, aspartate 203, and glutamate 204. N6-carboxylysine is present on lysine 201. Histidine 294 functions as the Proton acceptor in the catalytic mechanism. 3 residues coordinate substrate: arginine 295, histidine 327, and serine 379.

It belongs to the RuBisCO large chain family. Type I subfamily. Heterohexadecamer of 8 large chains and 8 small chains; disulfide-linked. The disulfide link is formed within the large subunit homodimers. The cofactor is Mg(2+). The disulfide bond which can form in the large chain dimeric partners within the hexadecamer appears to be associated with oxidative stress and protein turnover.

It is found in the plastid. The protein resides in the chloroplast. It carries out the reaction 2 (2R)-3-phosphoglycerate + 2 H(+) = D-ribulose 1,5-bisphosphate + CO2 + H2O. The enzyme catalyses D-ribulose 1,5-bisphosphate + O2 = 2-phosphoglycolate + (2R)-3-phosphoglycerate + 2 H(+). Functionally, ruBisCO catalyzes two reactions: the carboxylation of D-ribulose 1,5-bisphosphate, the primary event in carbon dioxide fixation, as well as the oxidative fragmentation of the pentose substrate in the photorespiration process. Both reactions occur simultaneously and in competition at the same active site. This is Ribulose bisphosphate carboxylase large chain from Staurastrum punctulatum (Green alga).